A 601-amino-acid chain; its full sequence is Mitochondrial tRNA methylthiotransferase CDK5RAP1 (601 aa).

A mitochondrion-targeting transit peptide spans 1 to 33; that stretch reads MHPLQCVLQVQRSLGWGPLASVSWLSLRMCRAH. Positions 100–220 constitute an MTTase N-terminal domain; that stretch reads RKVYLETYGC…LPRLLAVAES (121 aa). Residues cysteine 109, cysteine 145, cysteine 183, cysteine 258, cysteine 262, and cysteine 265 each coordinate [4Fe-4S] cluster. Positions 244 to 512 constitute a Radical SAM core domain; sequence SASATSAFVS…ITIFREEATK (269 aa). The region spanning 515–590 is the TRAM domain; that stretch reads QTSVGCTQLV…SQTLRGHVLC (76 aa).

Belongs to the methylthiotransferase family. MiaB subfamily. As to quaternary structure, interacts with CDK5R1 (p35 form). CDK5RAP1, CDK5RAP2 and CDK5RAP3 show competitive binding to CDK5R1. Forms a complex with CDK5R1 and CDK5. Requires [4Fe-4S] cluster as cofactor. Expressed in heart, brain, placenta, lung, liver, skeletal muscle, kidney and pancreas. Expressed in neurons of central nervous tissue. In terms of tissue distribution, mainly expressed in brain, placenta and testis. As to expression, high expression in placenta and lung.

It is found in the mitochondrion. It catalyses the reaction N(6)-dimethylallyladenosine(37) in tRNA + (sulfur carrier)-SH + AH2 + 2 S-adenosyl-L-methionine = 2-methylsulfanyl-N(6)-dimethylallyladenosine(37) in tRNA + (sulfur carrier)-H + 5'-deoxyadenosine + L-methionine + A + S-adenosyl-L-homocysteine + 2 H(+). Methylthiotransferase that catalyzes the conversion of N6-(dimethylallyl)adenosine (i(6)A) to 2-methylthio-N6-(dimethylallyl)adenosine (ms(2)i(6)A) at position 37 (adjacent to the 3'-end of the anticodon) of four mitochondrial DNA-encoded tRNAs (Ser(UCN), Phe, Tyr and Trp). Essential for efficient and highly accurate protein translation by the ribosome. Specifically inhibits CDK5 activation by CDK5R1. Essential for efficient mitochondrial protein synthesis and respiratory chain; shows pathological consequences in mitochondrial disease. This is Mitochondrial tRNA methylthiotransferase CDK5RAP1 from Homo sapiens (Human).